A 783-amino-acid chain; its full sequence is Glucosidase YgjK (783 aa).

An N-terminal signal peptide occupies residues methionine 1 to alanine 22. The segment at asparagine 24–leucine 254 is N-terminal domain. Residues leucine 254–threonine 299 form a linker region. The interval proline 300–glutamine 783 is a domain. Ca(2+) contacts are provided by aspartate 454, asparagine 456, asparagine 458, valine 460, and glutamate 462. The active-site Proton donor is the aspartate 524. Glutamate 572 serves as a coordination point for Ca(2+). Glutamate 750 (proton acceptor) is an active-site residue.

It belongs to the glycosyl hydrolase 63 family.

Glucoside hydrolase that cleaves the alpha-1,3-glucosidic linkage in nigerose. Has very low activity towards maltooligosaccharides, soluble starch, nigerotriose, kojibiose and trehalose. The polypeptide is Glucosidase YgjK (ygjK) (Escherichia coli (strain K12)).